The chain runs to 350 residues: Ion-translocating oxidoreductase complex subunit D (350 aa).

The next 4 membrane-spanning stretches (helical) occupy residues 37 to 57 (YFFG…ALTA), 68 to 88 (AVLS…IGVA), 89 to 109 (IPPI…IVLV), and 120 to 140 (IFNP…VQMT). T185 bears the FMN phosphoryl threonine mark. The next 5 membrane-spanning stretches (helical) occupy residues 212–232 (GYGV…LIML), 239–259 (WHIS…GYLL), 265–285 (VGPL…FIAT), 291–311 (ATSV…VYVI), and 315–335 (GGYP…APFI).

The protein belongs to the NqrB/RnfD family. The complex is composed of six subunits: RnfA, RnfB, RnfC, RnfD, RnfE and RnfG. Requires FMN as cofactor.

Its subcellular location is the cell inner membrane. Part of a membrane-bound complex that couples electron transfer with translocation of ions across the membrane. The sequence is that of Ion-translocating oxidoreductase complex subunit D from Shewanella pealeana (strain ATCC 700345 / ANG-SQ1).